A 389-amino-acid polypeptide reads, in one-letter code: Monomeric sarcosine oxidase (389 aa).

8–38 provides a ligand contact to FAD; the sequence is DVIVVGAGSMGMAAGYYLSKQGVKTLLVDSF. S-8alpha-FAD cysteine is present on Cys-318.

It belongs to the MSOX/MTOX family. MSOX subfamily. In terms of assembly, monomer. Requires FAD as cofactor.

It localises to the cytoplasm. The catalysed reaction is sarcosine + O2 + H2O = formaldehyde + glycine + H2O2. Functionally, catalyzes the oxidative demethylation of sarcosine. The sequence is that of Monomeric sarcosine oxidase (soxA) from Arthrobacter sp. (strain TE1826).